A 196-amino-acid polypeptide reads, in one-letter code: HTH-type transcriptional regulator BetI (196 aa).

Positions 8–68 (PVRREQLIRA…AAMRQILREL (61 aa)) constitute an HTH tetR-type domain. Positions 31 to 50 (TVATIAKKAGLSSGIVAHYF) form a DNA-binding region, H-T-H motif.

The protein operates within amine and polyamine biosynthesis; betaine biosynthesis via choline pathway [regulation]. Its function is as follows. Repressor involved in the biosynthesis of the osmoprotectant glycine betaine. It represses transcription of the choline transporter BetT and the genes of BetAB involved in the synthesis of glycine betaine. The sequence is that of HTH-type transcriptional regulator BetI from Stenotrophomonas maltophilia (strain R551-3).